Reading from the N-terminus, the 132-residue chain is Small ribosomal subunit protein eS6 (132 aa).

Belongs to the eukaryotic ribosomal protein eS6 family.

The sequence is that of Small ribosomal subunit protein eS6 from Methanosphaerula palustris (strain ATCC BAA-1556 / DSM 19958 / E1-9c).